The primary structure comprises 354 residues: S-adenosylmethionine:tRNA ribosyltransferase-isomerase (354 aa).

Belongs to the QueA family. As to quaternary structure, monomer.

Its subcellular location is the cytoplasm. It catalyses the reaction 7-aminomethyl-7-carbaguanosine(34) in tRNA + S-adenosyl-L-methionine = epoxyqueuosine(34) in tRNA + adenine + L-methionine + 2 H(+). It participates in tRNA modification; tRNA-queuosine biosynthesis. Its function is as follows. Transfers and isomerizes the ribose moiety from AdoMet to the 7-aminomethyl group of 7-deazaguanine (preQ1-tRNA) to give epoxyqueuosine (oQ-tRNA). The sequence is that of S-adenosylmethionine:tRNA ribosyltransferase-isomerase from Pseudomonas fluorescens (strain ATCC BAA-477 / NRRL B-23932 / Pf-5).